Here is a 286-residue protein sequence, read N- to C-terminus: Phosphonates import ATP-binding protein PhnC (286 aa).

Positions 3–246 (FHLKQVTRRF…AVTEIYGTDS (244 aa)) constitute an ABC transporter domain. 35–42 (GRSGAGKS) is an ATP binding site.

Belongs to the ABC transporter superfamily. Phosphonates importer (TC 3.A.1.9.1) family. As to quaternary structure, the complex is composed of two ATP-binding proteins (PhnC), two transmembrane proteins (PhnE) and a solute-binding protein (PhnD).

Its subcellular location is the cell inner membrane. It catalyses the reaction phosphonate(out) + ATP + H2O = phosphonate(in) + ADP + phosphate + H(+). Part of the ABC transporter complex PhnCDE involved in phosphonates import. Responsible for energy coupling to the transport system. In Agrobacterium fabrum (strain C58 / ATCC 33970) (Agrobacterium tumefaciens (strain C58)), this protein is Phosphonates import ATP-binding protein PhnC.